Here is a 209-residue protein sequence, read N- to C-terminus: uncharacterized protein (209 aa).

The protein belongs to the flavoredoxin family. The cofactor is FMN.

This is an uncharacterized protein from Halalkalibacterium halodurans (strain ATCC BAA-125 / DSM 18197 / FERM 7344 / JCM 9153 / C-125) (Bacillus halodurans).